The primary structure comprises 170 residues: Ubiquinone/menaquinone biosynthesis C-methyltransferase UbiE (170 aa).

A compositionally biased stretch (basic and acidic residues) spans 1-12 (MNDQRKGDHAEP). Positions 1 to 22 (MNDQRKGDHAEPTTHFGYQDVP) are disordered.

The protein belongs to the class I-like SAM-binding methyltransferase superfamily. MenG/UbiE family.

It catalyses the reaction a 2-demethylmenaquinol + S-adenosyl-L-methionine = a menaquinol + S-adenosyl-L-homocysteine + H(+). The catalysed reaction is a 2-methoxy-6-(all-trans-polyprenyl)benzene-1,4-diol + S-adenosyl-L-methionine = a 5-methoxy-2-methyl-3-(all-trans-polyprenyl)benzene-1,4-diol + S-adenosyl-L-homocysteine + H(+). It participates in quinol/quinone metabolism; menaquinone biosynthesis; menaquinol from 1,4-dihydroxy-2-naphthoate: step 2/2. It functions in the pathway cofactor biosynthesis; ubiquinone biosynthesis. Methyltransferase required for the conversion of demethylmenaquinol (DMKH2) to menaquinol (MKH2) and the conversion of 2-polyprenyl-6-methoxy-1,4-benzoquinol (DDMQH2) to 2-polyprenyl-3-methyl-6-methoxy-1,4-benzoquinol (DMQH2). The chain is Ubiquinone/menaquinone biosynthesis C-methyltransferase UbiE (ubiE) from Ectopseudomonas oleovorans (Pseudomonas oleovorans).